Reading from the N-terminus, the 623-residue chain is Aspartate--tRNA(Asp/Asn) ligase (623 aa).

Glu175 serves as a coordination point for L-aspartate. Positions 199-202 (QQFK) are aspartate. 2 residues coordinate L-aspartate: Arg221 and His455. Residue 221 to 223 (RDE) participates in ATP binding. Position 517 (Glu517) interacts with ATP. Arg524 contacts L-aspartate. 569 to 572 (GVDR) is an ATP binding site.

It belongs to the class-II aminoacyl-tRNA synthetase family. Type 1 subfamily. In terms of assembly, homodimer.

It is found in the cytoplasm. It catalyses the reaction tRNA(Asx) + L-aspartate + ATP = L-aspartyl-tRNA(Asx) + AMP + diphosphate. Functionally, aspartyl-tRNA synthetase with relaxed tRNA specificity since it is able to aspartylate not only its cognate tRNA(Asp) but also tRNA(Asn). Reaction proceeds in two steps: L-aspartate is first activated by ATP to form Asp-AMP and then transferred to the acceptor end of tRNA(Asp/Asn). This is Aspartate--tRNA(Asp/Asn) ligase from Methylocella silvestris (strain DSM 15510 / CIP 108128 / LMG 27833 / NCIMB 13906 / BL2).